A 130-amino-acid chain; its full sequence is MIDEKSIEFDFPEGILGFENIKKFIIKDSKYKPFSIMQSINKDVSFLVTSPFNFLSEYLPNIQEKDWSDIKAKEEDEKVILCIINMHVNDYKDITANLKAPIIINKKKLLGKQAICTNEKYSLHHKVFKE.

This sequence belongs to the FliW family. In terms of assembly, interacts with translational regulator CsrA and flagellin(s).

The protein resides in the cytoplasm. Functionally, acts as an anti-CsrA protein, binds CsrA and prevents it from repressing translation of its target genes, one of which is flagellin. Binds to flagellin and participates in the assembly of the flagellum. This chain is Flagellar assembly factor FliW, found in Borreliella burgdorferi (strain ATCC 35210 / DSM 4680 / CIP 102532 / B31) (Borrelia burgdorferi).